The following is a 505-amino-acid chain: Maturase K (505 aa).

The protein belongs to the intron maturase 2 family. MatK subfamily.

The protein localises to the plastid. The protein resides in the chloroplast. Usually encoded in the trnK tRNA gene intron. Probably assists in splicing its own and other chloroplast group II introns. The sequence is that of Maturase K from Micranthes integrifolia (Wholeleaf saxifrage).